Here is a 142-residue protein sequence, read N- to C-terminus: Large ribosomal subunit protein uL11 (142 aa).

The protein belongs to the universal ribosomal protein uL11 family. As to quaternary structure, part of the ribosomal stalk of the 50S ribosomal subunit. Interacts with L10 and the large rRNA to form the base of the stalk. L10 forms an elongated spine to which L12 dimers bind in a sequential fashion forming a multimeric L10(L12)X complex. One or more lysine residues are methylated.

Its function is as follows. Forms part of the ribosomal stalk which helps the ribosome interact with GTP-bound translation factors. The sequence is that of Large ribosomal subunit protein uL11 from Bartonella tribocorum (strain CIP 105476 / IBS 506).